An 88-amino-acid chain; its full sequence is UPF0223 protein BH2638 (88 aa).

Belongs to the UPF0223 family.

The sequence is that of UPF0223 protein BH2638 from Halalkalibacterium halodurans (strain ATCC BAA-125 / DSM 18197 / FERM 7344 / JCM 9153 / C-125) (Bacillus halodurans).